Consider the following 1048-residue polypeptide: FERM, ARHGEF and pleckstrin domain-containing protein 1 (1048 aa).

Residues M1 to G37 form a disordered region. A phosphoserine mark is found at S20 and S23. Residue T24 is modified to Phosphothreonine. Residues M40–E320 form the FERM domain. S340, S373, S389, S403, S427, S433, and S437 each carry phosphoserine. Positions F361 to K536 are disordered. Positions T371–L395 are enriched in polar residues. Composition is skewed to polar residues over residues S472–G491 and V498–P513. Phosphoserine is present on residues S512 and S516. A DH domain is found at K542–T733. Residues E762–D859 enclose the PH 1 domain. 3 positions are modified to phosphoserine: S836, S875, and S881. Residues N865–A907 are disordered. T886 carries the post-translational modification Phosphothreonine. A phosphoserine mark is found at S892, S899, and S902. The 98-residue stretch at E935 to S1032 folds into the PH 2 domain.

Interacts with CADM1. Interacts with RAC1. Detected in brain cortex, hippocampus, striatum, olfactory bulb, cerebellum and hindbrain (at protein level).

It localises to the cell membrane. It is found in the synapse. Its subcellular location is the synaptosome. The protein resides in the cytoplasm. The protein localises to the cytosol. It localises to the cell projection. It is found in the filopodium. Its subcellular location is the dendrite. The protein resides in the dendritic spine. In terms of biological role, functions as a guanine nucleotide exchange factor for RAC1. May play a role in semaphorin signaling. Plays a role in the assembly and disassembly of dendritic filopodia, the formation of dendritic spines, regulation of dendrite length and ultimately the formation of synapses. This chain is FERM, ARHGEF and pleckstrin domain-containing protein 1 (Farp1), found in Mus musculus (Mouse).